We begin with the raw amino-acid sequence, 356 residues long: MAEWANAAFAARRRGDETTRDNAFSYTNSNNTRDPFEGPNYHIAPRWVYNVATVWMFFVVVASTFTNGLVLVATAKFKKLRHPLNWILVNLAIADLGETLFASTISVINQVFGYFILGHPMCIFEGYTVSVCGIAGLWSLTVISWERWVVVCKPFGNVKFDGKWASAGIIFSWVWAAVWCAPPIFGWSRYWPHGLKTSCGPDVFGGNEDPGVQSYMLVLMITCCILPLAIIILCYIAVFLAIHAVAQQQKDSESTQKAEKEVSRMVVVMILAFCLCWGPYTAFACFAAANPGYAFHPLAAAMPAYFAKSATIYNPIIYVFMNRQFRVCIMQLFGKKVDDGSEVSTSKTEVSSVAPA.

The Extracellular portion of the chain corresponds to 1–48 (MAEWANAAFAARRRGDETTRDNAFSYTNSNNTRDPFEGPNYHIAPRWV). Asparagine 30 is a glycosylation site (N-linked (GlcNAc...) asparagine). The chain crosses the membrane as a helical span at residues 49–73 (YNVATVWMFFVVVASTFTNGLVLVA). The Cytoplasmic portion of the chain corresponds to 74 to 85 (TAKFKKLRHPLN). The helical transmembrane segment at 86–111 (WILVNLAIADLGETLFASTISVINQV) threads the bilayer. Over 112–125 (FGYFILGHPMCIFE) the chain is Extracellular. A disulfide bond links cysteine 122 and cysteine 199. The helical transmembrane segment at 126-145 (GYTVSVCGIAGLWSLTVISW) threads the bilayer. The Cytoplasmic segment spans residues 146–164 (ERWVVVCKPFGNVKFDGKW). Residues 165 to 188 (ASAGIIFSWVWAAVWCAPPIFGWS) traverse the membrane as a helical segment. The Extracellular portion of the chain corresponds to 189-214 (RYWPHGLKTSCGPDVFGGNEDPGVQS). The helical transmembrane segment at 215–242 (YMLVLMITCCILPLAIIILCYIAVFLAI) threads the bilayer. Over 243 to 264 (HAVAQQQKDSESTQKAEKEVSR) the chain is Cytoplasmic. A helical transmembrane segment spans residues 265–288 (MVVVMILAFCLCWGPYTAFACFAA). At 289–296 (ANPGYAFH) the chain is on the extracellular side. A helical transmembrane segment spans residues 297–321 (PLAAAMPAYFAKSATIYNPIIYVFM). The residue at position 308 (lysine 308) is an N6-(retinylidene)lysine. Topologically, residues 322–356 (NRQFRVCIMQLFGKKVDDGSEVSTSKTEVSSVAPA) are cytoplasmic.

This sequence belongs to the G-protein coupled receptor 1 family. Opsin subfamily. Phosphorylated on some or all of the serine and threonine residues present in the C-terminal region.

The protein resides in the membrane. Its function is as follows. Visual pigments are the light-absorbing molecules that mediate vision. They consist of an apoprotein, opsin, covalently linked to cis-retinal. The polypeptide is Red-sensitive opsin-2 (opn1lw2) (Danio rerio (Zebrafish)).